The chain runs to 473 residues: Ribulose bisphosphate carboxylase large chain (473 aa).

The necessary and sufficient to target proteins to carboxysomes, interacts with shell proteins stretch occupies residues 1–136 (MAVKKYSAGV…RLEDVRFPLA (136 aa)). Residues Asn116 and Thr166 each coordinate substrate. Lys168 acts as the Proton acceptor in catalysis. Lys170 contributes to the substrate binding site. Mg(2+) is bound by residues Lys194, Asp196, and Glu197. Lys194 carries the N6-carboxylysine modification. His287 functions as the Proton acceptor in the catalytic mechanism. Substrate contacts are provided by Arg288, His320, and Ser372.

This sequence belongs to the RuBisCO large chain family. Type I subfamily. In terms of assembly, heterohexadecamer of 8 large chains and 8 small chains. Forms a CsoS2-CsoS1-RuBisCO complex. The N-terminus (residues 1-136) interacts with shell proteins CsoS1A, CsoS1B and CsoS1C. Holo-RuBisCO interacts with the N-terminal repeats of CsoS2; binding is sensitive to ionic strength. A fusion of a single N-terminal repeat to the C-terminus of the large subunit of RuBisCO (cbbL) shows the repeat can lie between a CbbL dimer, making minor contacts to CbbS; thus each RuBisCO holoenzyme could bind 8 repeats. Requires Mg(2+) as cofactor.

The protein localises to the carboxysome. The catalysed reaction is 2 (2R)-3-phosphoglycerate + 2 H(+) = D-ribulose 1,5-bisphosphate + CO2 + H2O. The enzyme catalyses D-ribulose 1,5-bisphosphate + O2 = 2-phosphoglycolate + (2R)-3-phosphoglycerate + 2 H(+). Its function is as follows. RuBisCO catalyzes two reactions: the carboxylation of D-ribulose 1,5-bisphosphate, the primary event in carbon dioxide fixation, as well as the oxidative fragmentation of the pentose substrate. Both reactions occur simultaneously and in competition at the same active site. There are estimated to be 270 RuBisCO heterohexadecamers per carboxysome. Functionally, alpha-carboxysomes are able to assemble in the absence of RuBisCO, unlike beta-carboxysomes. The RuBisCO large subunit is required for enzyme integration into carboxysomes; replacing it with the carboxysomally targeted gene (Tcr_0838, AC Q31HD9) of H.crungenus places RuBisCO in the carboxysome, while the non-carboxysomal large subunit of H.crungenus (Tcr_0427, AC Q31IK0) is not incorporated in the carboxysome. The protein is Ribulose bisphosphate carboxylase large chain of Halothiobacillus neapolitanus (strain ATCC 23641 / c2) (Thiobacillus neapolitanus).